A 314-amino-acid chain; its full sequence is Chitinase 1 (314 aa).

A signal peptide spans Met-1–Ala-26. A GH18 domain is found at Leu-27 to Gln-296. Glu-151 (proton donor) is an active-site residue.

Belongs to the glycosyl hydrolase 18 family. Chitinase class II subfamily.

The enzyme catalyses Random endo-hydrolysis of N-acetyl-beta-D-glucosaminide (1-&gt;4)-beta-linkages in chitin and chitodextrins.. Functionally, able to cleave glycolchitin. This is Chitinase 1 from Tulipa saxatilis subsp. bakeri (Tulip).